The following is a 408-amino-acid chain: Succinylornithine transaminase (408 aa).

Lys252 carries the N6-(pyridoxal phosphate)lysine modification.

The protein belongs to the class-III pyridoxal-phosphate-dependent aminotransferase family. AstC subfamily. The cofactor is pyridoxal 5'-phosphate.

It carries out the reaction N(2)-succinyl-L-ornithine + 2-oxoglutarate = N-succinyl-L-glutamate 5-semialdehyde + L-glutamate. It participates in amino-acid degradation; L-arginine degradation via AST pathway; L-glutamate and succinate from L-arginine: step 3/5. Functionally, catalyzes the transamination of N(2)-succinylornithine and alpha-ketoglutarate into N(2)-succinylglutamate semialdehyde and glutamate. Can also act as an acetylornithine aminotransferase. In Salmonella agona (strain SL483), this protein is Succinylornithine transaminase.